Here is a 331-residue protein sequence, read N- to C-terminus: DNA-directed RNA polymerase subunit alpha (331 aa).

The alpha N-terminal domain (alpha-NTD) stretch occupies residues 1–232; it reads MQGTFRDFLK…DQLSVFVDLE (232 aa). The alpha C-terminal domain (alpha-CTD) stretch occupies residues 247 to 331; it reads VDPILLRPID…AGLGEDRVVG (85 aa).

This sequence belongs to the RNA polymerase alpha chain family. Homodimer. The RNAP catalytic core consists of 2 alpha, 1 beta, 1 beta' and 1 omega subunit. When a sigma factor is associated with the core the holoenzyme is formed, which can initiate transcription.

It carries out the reaction RNA(n) + a ribonucleoside 5'-triphosphate = RNA(n+1) + diphosphate. Its function is as follows. DNA-dependent RNA polymerase catalyzes the transcription of DNA into RNA using the four ribonucleoside triphosphates as substrates. This chain is DNA-directed RNA polymerase subunit alpha, found in Alkalilimnicola ehrlichii (strain ATCC BAA-1101 / DSM 17681 / MLHE-1).